The primary structure comprises 71 residues: MPAGVPMSTYLKMFAASLLAMCAGAEVVHRYYRPDLTIPEIPPKRGELKTELLGLKERKHKPQVSQQEELK.

At 1-8 the chain is on the mitochondrial matrix side; it reads MPAGVPMS. Residues 9–25 traverse the membrane as a helical; Signal-anchor for type II membrane protein segment; sequence TYLKMFAASLLAMCAGA. Residues 26-71 are Mitochondrial intermembrane-facing; sequence EVVHRYYRPDLTIPEIPPKRGELKTELLGLKERKHKPQVSQQEELK.

The protein belongs to the UQCC6 family. In terms of assembly, interacts with UQCRC1. Interacts with UQCRQ. Interacts with UQCC5. Forms a complex, named COMB/coordinator of mitochondrial CYTB biogenesis, composed of UQCC1, UQCC2, UQCC4, UQCC5 and UQCC6; stabilizes nascent cytochrome b/MT-CYB and promotes its membrane insertion. Forms a complex, named COMA, composed of UQCC1, UQCC2 and UQCC4; activates MT-CYB translation. Forms a complex, named COMC, composed of UQCC1, UQCC2; UQCC3 and UQCC4; mediates MT-CYB hemylation and association with the first nuclear-encoded complex III subunit UQCRQ. Interacts with MT-CYB. As to expression, cardiac and skeletal muscle (at protein level).

The protein resides in the mitochondrion inner membrane. In terms of biological role, required for the assembly and stability of the mitochondrial ubiquinol-cytochrome c reductase complex (complex III (CIII) or cytochrome b-c1 complex), a multisubunit transmembrane complex that is part of the mitochondrial electron transport chain (ETC) which drives oxidative phosphorylation. Mediates early complex III biogenesis. Participates in regulating the levels of electron transport chain proteins, and therefore energy supply, in response to changes in energy demand. Also required for cytochrome c oxidase complex (complex IV) assembly. The sequence is that of Ubiquinol-cytochrome c reductase complex assembly factor 6 from Homo sapiens (Human).